A 514-amino-acid chain; its full sequence is 2,3-bisphosphoglycerate-independent phosphoglycerate mutase (514 aa).

Asp14 and Ser64 together coordinate Mn(2+). Residue Ser64 is the Phosphoserine intermediate of the active site. Substrate-binding positions include His125, 155–156 (RD), Arg187, Arg193, 263–266 (RADR), and Lys336. Residues Asp403, His407, Asp444, His445, and His463 each coordinate Mn(2+).

This sequence belongs to the BPG-independent phosphoglycerate mutase family. Monomer. Requires Mn(2+) as cofactor.

The enzyme catalyses (2R)-2-phosphoglycerate = (2R)-3-phosphoglycerate. It functions in the pathway carbohydrate degradation; glycolysis; pyruvate from D-glyceraldehyde 3-phosphate: step 3/5. Catalyzes the interconversion of 2-phosphoglycerate and 3-phosphoglycerate. The protein is 2,3-bisphosphoglycerate-independent phosphoglycerate mutase of Shewanella sp. (strain MR-4).